The following is a 94-amino-acid chain: MARSLKKGPFIDDHLLKKVDEMNEKGEKKVFKTWSRRSTIFPQMIGHTIAVYDGRKHIPVYITEDMVGHKLGEFAPTRTYRGHADKSERSTGLK.

The protein belongs to the universal ribosomal protein uS19 family.

In terms of biological role, protein S19 forms a complex with S13 that binds strongly to the 16S ribosomal RNA. This chain is Small ribosomal subunit protein uS19, found in Desulforamulus reducens (strain ATCC BAA-1160 / DSM 100696 / MI-1) (Desulfotomaculum reducens).